The chain runs to 1873 residues: MEPSSPQDEGLRKKQPKKPLPEVLPRPPRALFCLTLQNPLRKACISIVEWKPFETIILLTIFANCVALAVYLPMPEDDNNSLNLGLEKLEYFFLTVFSIEAAMKIIAYGFLFHQDAYLRSGWNVLDFIIVFLGVFTAILEQVNVIQSNTAPMSSKGAGLDVKALRAFRVLRPLRLVSGVPSLQVVLNSIFKAMLPLFHIALLVLFMVIIYAIIGLELFKGKMHKTCYYIGTDIVATVENEKPSPCARTGSGRPCTINGSECRGGWPGPNHGITHFDNFGFSMLTVYQCITMEGWTDVLYWVNDAIGNEWPWIYFVTLILLGSFFILNLVLGVLSGEFTKEREKAKSRGTFQKLREKQQLEEDLRGYMSWITQGEVMDVEDLREGKLSLEEGGSDTESLYEIEGLNKIIQFIRHWRQWNRVFRWKCHDLVKSRVFYWLVILIVALNTLSIASEHHNQPLWLTHLQDIANRVLLSLFTIEMLLKMYGLGLRQYFMSIFNRFDCFVVCSGILELLLVESGAMTPLGISVLRCIRLLRLFKITKYWTSLSNLVASLLNSIRSIASLLLLLFLFIIIFALLGMQLFGGRYDFEDTEVRRSNFDNFPQALISVFQVLTGEDWNSVMYNGIMAYGGPSYPGVLVCIYFIILFVCGNYILLNVFLAIAVDNLAEAESLTSAQKAKAEERKRRKMSRGLPDKTEEEKSVMAKKLEQKPKGEGIPTTAKLKVDEFESNVNEVKDPYPSADFPGDDEEDEPEIPVSPRPRPLAELQLKEKAVPIPEASSFFIFSPTNKVRVLCHRIVNATWFTNFILLFILLSSAALAAEDPIRAESVRNQILGYFDIAFTSVFTVEIVLKMTTYGAFLHKGSFCRNYFNILDLLVVAVSLISMGLESSTISVVKILRVLRVLRPLRAINRAKGLKHVVQCVFVAIRTIGNIVLVTTLLQFMFACIGVQLFKGKFFSCNDLSKMTEEECRGYYYVYKDGDPTQMELRPRQWIHNDFHFDNVLSAMMSLFTVSTFEGWPQLLYRAIDSNEEDMGPVYNNRVEMAIFFIIYIILIAFFMMNIFVGFVIVTFQEQGETEYKNCELDKNQRQCVQYALKARPLRCYIPKNPYQYQVWYVVTSSYFEYLMFALIMLNTICLGMQHYHQSEEMNHISDILNVAFTIIFTLEMILKLLAFKARGYFGDPWNVFDFLIVIGSIIDVILSEIDTFLASSGGLYCLGGGCGNVDPDESARISSAFFRLFRVMRLIKLLSRAEGVRTLLWTFIKSFQALPYVALLIVMLFFIYAVIGMQMFGKIALVDGTQINRNNNFQTFPQAVLLLFRCATGEAWQEILLACSYGKLCDPESDYAPGEEYTCGTNFAYYYFISFYMLCAFLIINLFVAVIMDNFDYLTRDWSILGPHHLDEFKAIWAEYDPEAKGRIKHLDVVTLLRRIQPPLGFGKFCPHRVACKRLVGMNMPLNSDGTVTFNATLFALVRTALKIKTEGNFEQANEELRAIIKKIWKRTSMKLLDQVIPPIGDDEVTVGKFYATFLIQEHFRKFMKRQEEYYGYRPKKDTVQIQAGLRTIEEEAAPEIRRTISGDLTAEEELERAMVEAAMEERIFRRTGGLFGQVDTFLERTNSLPPVMANQRPLQFAEIEMEELESPVFLEDFPQDARTNPLARANTNNANANVAYGNSNHSNNQMFSSVHCEREFPGEAETPAAGRGALSHSHRALGPHSKPCAGKLNGQLVQPGMPINQAPPAPCQQPSTDPPERGQRRTSLTGSLQDEAPQRRSSEGSTPRRPAPATALLIQEALVRGGLDTLAADAGFVTATSQALADACQMEPEEVEVAATELLKARESVQGMASVPGSLSRRSSLGSLDQVQGSQETLIPPRP.

A disordered region spans residues 1-23 (MEPSSPQDEGLRKKQPKKPLPEV). Residues 1 to 51 (MEPSSPQDEGLRKKQPKKPLPEVLPRPPRALFCLTLQNPLRKACISIVEWK) lie on the Cytoplasmic side of the membrane. One copy of the I repeat lies at 38-337 (NPLRKACISI…LVLGVLSGEF (300 aa)). The chain crosses the membrane as a helical span at residues 52–70 (PFETIILLTIFANCVALAV). Over 71-85 (YLPMPEDDNNSLNLG) the chain is Extracellular. N79 carries an N-linked (GlcNAc...) asparagine glycan. Residues 86-106 (LEKLEYFFLTVFSIEAAMKII) form a helical membrane-spanning segment. Residues 107 to 115 (AYGFLFHQD) lie on the Cytoplasmic side of the membrane. Residues 116-136 (AYLRSGWNVLDFIIVFLGVFT) traverse the membrane as a helical segment. At 137–160 (AILEQVNVIQSNTAPMSSKGAGLD) the chain is on the extracellular side. A helical transmembrane segment spans residues 161–179 (VKALRAFRVLRPLRLVSGV). Topologically, residues 180-196 (PSLQVVLNSIFKAMLPL) are cytoplasmic. A helical transmembrane segment spans residues 197–218 (FHIALLVLFMVIIYAIIGLELF). The Extracellular segment spans residues 219-279 (KGKMHKTCYY…HGITHFDNFG (61 aa)). 2 cysteine pairs are disulfide-bonded: C226–C254 and C245–C261. N257 carries an N-linked (GlcNAc...) asparagine glycan. The pore-forming intramembrane region spans 280–301 (FSMLTVYQCITMEGWTDVLYWV). The Selectivity filter of repeat I motif lies at 290–293 (TMEG). Position 292 (E292) interacts with Ca(2+). The Extracellular segment spans residues 302 to 309 (NDAIGNEW). A helical transmembrane segment spans residues 310-330 (PWIYFVTLILLGSFFILNLVL). Residues 331 to 432 (GVLSGEFTKE…WKCHDLVKSR (102 aa)) are Cytoplasmic-facing. The tract at residues 357–374 (QQLEEDLRGYMSWITQGE) is binding to the beta subunit. Residues S393 and S397 each carry the phosphoserine modification. Residues 418-664 (NRVFRWKCHD…VFLAIAVDNL (247 aa)) form an II repeat. A helical transmembrane segment spans residues 433 to 451 (VFYWLVILIVALNTLSIAS). The Extracellular segment spans residues 452–462 (EHHNQPLWLTH). A helical membrane pass occupies residues 463–483 (LQDIANRVLLSLFTIEMLLKM). At 484 to 494 (YGLGLRQYFMS) the chain is on the cytoplasmic side. A helical membrane pass occupies residues 495–514 (IFNRFDCFVVCSGILELLLV). Residues 515–523 (ESGAMTPLG) lie on the Extracellular side of the membrane. A helical membrane pass occupies residues 524 to 542 (ISVLRCIRLLRLFKITKYW). At 543 to 561 (TSLSNLVASLLNSIRSIAS) the chain is on the cytoplasmic side. Residues 562–581 (LLLLLFLFIIIFALLGMQLF) traverse the membrane as a helical segment. The Extracellular portion of the chain corresponds to 582 to 601 (GGRYDFEDTEVRRSNFDNFP). The segment at residues 602 to 623 (QALISVFQVLTGEDWNSVMYNG) is an intramembrane region (pore-forming). A Selectivity filter of repeat II motif is present at residues 612 to 615 (TGED). E614 lines the Ca(2+) pocket. Topologically, residues 624-633 (IMAYGGPSYP) are extracellular. The helical transmembrane segment at 634–653 (GVLVCIYFIILFVCGNYILL) threads the bilayer. The Cytoplasmic segment spans residues 654-799 (NVFLAIAVDN…VLCHRIVNAT (146 aa)). 2 disordered regions span residues 673–717 (AQKA…IPTT) and 731–757 (EVKD…VSPR). Phosphoserine; by PKA is present on S687. Positions 690-711 (LPDKTEEEKSVMAKKLEQKPKG) are enriched in basic and acidic residues. The span at 742–751 (PGDDEEDEPE) shows a compositional bias: acidic residues. An interaction with STAC, STAC2 and STAC3 (via SH3 domains) region spans residues 747-760 (EDEPEIPVSPRPRP). The stretch at 786–1068 (NKVRVLCHRI…IFVGFVIVTF (283 aa)) is one III repeat. The helical transmembrane segment at 800 to 818 (WFTNFILLFILLSSAALAA) threads the bilayer. Topologically, residues 819–830 (EDPIRAESVRNQ) are extracellular. Residues 831–850 (ILGYFDIAFTSVFTVEIVLK) traverse the membrane as a helical segment. At 851–866 (MTTYGAFLHKGSFCRN) the chain is on the cytoplasmic side. A helical transmembrane segment spans residues 867 to 885 (YFNILDLLVVAVSLISMGL). Topologically, residues 886-892 (ESSTISV) are extracellular. A helical membrane pass occupies residues 893-911 (VKILRVLRVLRPLRAINRA). Topologically, residues 912 to 930 (KGLKHVVQCVFVAIRTIGN) are cytoplasmic. Residues 931–950 (IVLVTTLLQFMFACIGVQLF) traverse the membrane as a helical segment. Residues 951–1000 (KGKFFSCNDLSKMTEEECRGYYYVYKDGDPTQMELRPRQWIHNDFHFDNV) lie on the Extracellular side of the membrane. A disulfide bridge links C957 with C968. The tract at residues 988–1077 (RQWIHNDFHF…FQEQGETEYK (90 aa)) is dihydropyridine binding. An intramembrane region (pore-forming) is located at residues 1001–1021 (LSAMMSLFTVSTFEGWPQLLY). The Selectivity filter of repeat III motif lies at 1012–1015 (TFEG). E1014 lines the Ca(2+) pocket. The Extracellular segment spans residues 1022–1038 (RAIDSNEEDMGPVYNNR). Residues 1039-1060 (VEMAIFFIIYIILIAFFMMNIF) form a helical membrane-spanning segment. Over 1061 to 1118 (VGFVIVTFQEQGETEYKNCELDKNQRQCVQYALKARPLRCYIPKNPYQYQVWYVVTSS) the chain is Cytoplasmic. One copy of the IV repeat lies at 1105 to 1384 (NPYQYQVWYV…LFVAVIMDNF (280 aa)). Residues 1119–1140 (YFEYLMFALIMLNTICLGMQHY) traverse the membrane as a helical segment. The Extracellular portion of the chain corresponds to 1141 to 1148 (HQSEEMNH). Residues 1149 to 1170 (ISDILNVAFTIIFTLEMILKLL) form a helical membrane-spanning segment. Topologically, residues 1171–1180 (AFKARGYFGD) are cytoplasmic. The chain crosses the membrane as a helical span at residues 1181–1200 (PWNVFDFLIVIGSIIDVILS). Residues 1201–1231 (EIDTFLASSGGLYCLGGGCGNVDPDESARIS) are Extracellular-facing. A helical membrane pass occupies residues 1232–1250 (SAFFRLFRVMRLIKLLSRA). Topologically, residues 1251–1268 (EGVRTLLWTFIKSFQALP) are cytoplasmic. A helical transmembrane segment spans residues 1269 to 1289 (YVALLIVMLFFIYAVIGMQMF). At 1290 to 1311 (GKIALVDGTQINRNNNFQTFPQ) the chain is on the extracellular side. An intramembrane region (pore-forming) is located at residues 1312–1330 (AVLLLFRCATGEAWQEILL). The Selectivity filter of repeat IV motif lies at 1321-1324 (TGEA). The Extracellular portion of the chain corresponds to 1331–1356 (ACSYGKLCDPESDYAPGEEYTCGTNF). The segment at 1337–1403 (LCDPESDYAP…LGPHHLDEFK (67 aa)) is dihydropyridine binding. C1338 and C1352 form a disulfide bridge. The phenylalkylamine binding stretch occupies residues 1349–1391 (EYTCGTNFAYYYFISFYMLCAFLIINLFVAVIMDNFDYLTRDW). Residues 1357-1381 (AYYYFISFYMLCAFLIINLFVAVIM) form a helical membrane-spanning segment. The Cytoplasmic portion of the chain corresponds to 1382–1873 (DNFDYLTRDW…SQETLIPPRP (492 aa)). The interval 1522-1542 (KFYATFLIQEHFRKFMKRQEE) is interaction with calmodulin. S1575 carries the post-translational modification Phosphoserine; by PKA and CAMK2. T1579 bears the Phosphothreonine; by CK2 mark. S1617 carries the phosphoserine; by PKA modification. 2 disordered regions span residues 1689 to 1782 (EFPG…RPAP) and 1841 to 1873 (GMAS…PPRP). The span at 1847 to 1858 (GSLSRRSSLGSL) shows a compositional bias: low complexity.

It belongs to the calcium channel alpha-1 subunit (TC 1.A.1.11) family. CACNA1S subfamily. In terms of assembly, component of a calcium channel complex consisting of a pore-forming alpha subunit (CACNA1S) and the ancillary subunits CACNB1 or CACNB2, CACNG1 and CACNA2D1. The channel complex contains alpha, beta, gamma and delta subunits in a 1:1:1:1 ratio, i.e. it contains either CACNB1 or CACNB2. CACNA1S channel activity is modulated by the auxiliary subunits (CACNB1 or CACNB2, CACNG1 and CACNA2D1). Interacts with DYSF and JSRP1. Interacts with RYR1. Interacts with STAC, STAC2 and STAC3 (via their SH3 domains). Interaction with STAC3 promotes expression at the cell membrane. Interaction with STAC2 promotes expression at the cell membrane, but with much lower efficiency than STAC3. Interaction with STAC1 leads to very low levels expression at the cell membrane, much less than the levels observed upon interaction with STAC3 and STAC2. Interacts with CALM. The alpha-1S subunit is found in two isoforms in the skeletal muscle: a minor form of 212 kDa containing the complete amino acid sequence, and a major form of 190 kDa derived from the full-length form by post-translational proteolysis close to Phe-1690. Post-translationally, phosphorylated. Phosphorylation by PKA activates the calcium channel. Both the minor and major forms are phosphorylated in vitro by PKA. Phosphorylation at Ser-1575 is involved in beta-adrenergic-mediated regulation of the channel. Detected in skeletal muscle T-tubules (at protein level).

It localises to the cell membrane. The protein resides in the sarcolemma. The protein localises to the T-tubule. The enzyme catalyses Ca(2+)(in) = Ca(2+)(out). With respect to regulation, channel activity is blocked by dihydropyridines (DHP), phenylalkylamines, and by benzothiazepines. In terms of biological role, pore-forming, alpha-1S subunit of the voltage-gated calcium channel that gives rise to L-type calcium currents in skeletal muscle. Calcium channels containing the alpha-1S subunit play an important role in excitation-contraction coupling in skeletal muscle via their interaction with RYR1, which triggers Ca(2+) release from the sarcplasmic reticulum and ultimately results in muscle contraction. Long-lasting (L-type) calcium channels belong to the 'high-voltage activated' (HVA) group. In Oryctolagus cuniculus (Rabbit), this protein is Voltage-dependent L-type calcium channel subunit alpha-1S (CACNA1S).